The sequence spans 476 residues: Glycogen synthase (476 aa).

Lys-15 contributes to the ADP-alpha-D-glucose binding site.

Belongs to the glycosyltransferase 1 family. Bacterial/plant glycogen synthase subfamily.

It catalyses the reaction [(1-&gt;4)-alpha-D-glucosyl](n) + ADP-alpha-D-glucose = [(1-&gt;4)-alpha-D-glucosyl](n+1) + ADP + H(+). The protein operates within glycan biosynthesis; glycogen biosynthesis. Synthesizes alpha-1,4-glucan chains using ADP-glucose. This is Glycogen synthase from Streptococcus agalactiae serotype Ia (strain ATCC 27591 / A909 / CDC SS700).